The following is a 108-amino-acid chain: Evasin P1127 (108 aa).

Positions 1–28 (MEAKTFAFLEIAMFIALGIQTFVAVTDA) are cleaved as a signal peptide. Intrachain disulfides connect Cys41–Cys63, Cys45–Cys65, and Cys56–Cys76. N-linked (GlcNAc...) asparagine glycosylation occurs at Asn44. Asn89 carries N-linked (GlcNAc...) asparagine glycosylation.

The protein localises to the secreted. Functionally, salivary chemokine-binding protein which binds to host chemokines CXCL1, CXCL2, CXCL3, CXCL5 and CXCL8. In Ixodes ricinus (Common tick), this protein is Evasin P1127.